Consider the following 362-residue polypeptide: Olfactory receptor 5AU1 (362 aa).

The Extracellular portion of the chain corresponds to 1 to 79; the sequence is MTEFHLQSQM…TDPQLQRLLF (79 aa). An N-linked (GlcNAc...) asparagine glycan is attached at Asn56. A helical membrane pass occupies residues 80-100; that stretch reads VVFLGMYTATLLGNLVMFLLI. Over 101 to 116 the chain is Cytoplasmic; sequence HVSATLHTPMYSLLKS. A helical transmembrane segment spans residues 117-139; the sequence is LSFLDFCYSSTVVPQTLVNFLAK. Over 140 to 150 the chain is Extracellular; that stretch reads RKVISYFGCMT. Cys148 and Cys230 are oxidised to a cystine. A helical transmembrane segment spans residues 151–171; sequence QMFFYAGFATSECYLIAAMAY. The Cytoplasmic segment spans residues 172–194; it reads DRYAAICNPLLYSTIMSPEVCAS. The chain crosses the membrane as a helical span at residues 195 to 215; it reads LIVGSYSAGFLNSLIHTGCIF. Topologically, residues 216-247 are extracellular; it reads SLKFCGAHVVTHFFCDGPPILSLSCVDTSLCE. Residues 248–268 form a helical membrane-spanning segment; the sequence is ILLFIFAGFNLLSCTLTILIS. The Cytoplasmic portion of the chain corresponds to 269 to 290; that stretch reads YFLILNTILKMSSAQGRFKAFS. The chain crosses the membrane as a helical span at residues 291–311; that stretch reads TCASHLTAICLFFGTTLFMYL. Topologically, residues 312 to 322 are extracellular; the sequence is RPRSSYSLTQD. A helical membrane pass occupies residues 323–343; that stretch reads RTVAVIYTVVIPVLNPLMYSL. The Cytoplasmic segment spans residues 344 to 362; that stretch reads RNKDVKKALIKVWGRKTME.

It belongs to the G-protein coupled receptor 1 family.

It is found in the cell membrane. In terms of biological role, odorant receptor. In Homo sapiens (Human), this protein is Olfactory receptor 5AU1 (OR5AU1).